The primary structure comprises 127 residues: Small ribosomal subunit protein uS12 (127 aa).

Position 89 is a 3-methylthioaspartic acid (aspartate 89). A disordered region spans residues 101–127 (ALDTSGVAGRTQRRSKYGAKRPKEAKK). Residues 111–127 (TQRRSKYGAKRPKEAKK) are compositionally biased toward basic residues.

This sequence belongs to the universal ribosomal protein uS12 family. In terms of assembly, part of the 30S ribosomal subunit. Contacts proteins S8 and S17. May interact with IF1 in the 30S initiation complex.

With S4 and S5 plays an important role in translational accuracy. In terms of biological role, interacts with and stabilizes bases of the 16S rRNA that are involved in tRNA selection in the A site and with the mRNA backbone. Located at the interface of the 30S and 50S subunits, it traverses the body of the 30S subunit contacting proteins on the other side and probably holding the rRNA structure together. The combined cluster of proteins S8, S12 and S17 appears to hold together the shoulder and platform of the 30S subunit. The protein is Small ribosomal subunit protein uS12 of Flavobacterium johnsoniae (strain ATCC 17061 / DSM 2064 / JCM 8514 / BCRC 14874 / CCUG 350202 / NBRC 14942 / NCIMB 11054 / UW101) (Cytophaga johnsonae).